We begin with the raw amino-acid sequence, 177 residues long: Adenine phosphoribosyltransferase (177 aa).

This sequence belongs to the purine/pyrimidine phosphoribosyltransferase family. Homodimer.

Its subcellular location is the cytoplasm. The enzyme catalyses AMP + diphosphate = 5-phospho-alpha-D-ribose 1-diphosphate + adenine. Its pathway is purine metabolism; AMP biosynthesis via salvage pathway; AMP from adenine: step 1/1. In terms of biological role, catalyzes a salvage reaction resulting in the formation of AMP, that is energically less costly than de novo synthesis. This Chlorobium phaeovibrioides (strain DSM 265 / 1930) (Prosthecochloris vibrioformis (strain DSM 265)) protein is Adenine phosphoribosyltransferase.